A 350-amino-acid chain; its full sequence is Biotin synthase (350 aa).

Positions 38–256 constitute a Radical SAM core domain; that stretch reads NHVQVSTLLS…IAVARIMMPE (219 aa). Positions 53, 57, and 60 each coordinate [4Fe-4S] cluster. [2Fe-2S] cluster is bound by residues Cys97, Cys128, Cys188, and Arg260.

Belongs to the radical SAM superfamily. Biotin synthase family. In terms of assembly, homodimer. It depends on [4Fe-4S] cluster as a cofactor. [2Fe-2S] cluster serves as cofactor.

It catalyses the reaction (4R,5S)-dethiobiotin + (sulfur carrier)-SH + 2 reduced [2Fe-2S]-[ferredoxin] + 2 S-adenosyl-L-methionine = (sulfur carrier)-H + biotin + 2 5'-deoxyadenosine + 2 L-methionine + 2 oxidized [2Fe-2S]-[ferredoxin]. It participates in cofactor biosynthesis; biotin biosynthesis; biotin from 7,8-diaminononanoate: step 2/2. Functionally, catalyzes the conversion of dethiobiotin (DTB) to biotin by the insertion of a sulfur atom into dethiobiotin via a radical-based mechanism. In Aliivibrio fischeri (strain ATCC 700601 / ES114) (Vibrio fischeri), this protein is Biotin synthase.